The sequence spans 577 residues: Proline--tRNA ligase (577 aa).

The protein belongs to the class-II aminoacyl-tRNA synthetase family. ProS type 1 subfamily. Homodimer.

It is found in the cytoplasm. It carries out the reaction tRNA(Pro) + L-proline + ATP = L-prolyl-tRNA(Pro) + AMP + diphosphate. Functionally, catalyzes the attachment of proline to tRNA(Pro) in a two-step reaction: proline is first activated by ATP to form Pro-AMP and then transferred to the acceptor end of tRNA(Pro). As ProRS can inadvertently accommodate and process non-cognate amino acids such as alanine and cysteine, to avoid such errors it has two additional distinct editing activities against alanine. One activity is designated as 'pretransfer' editing and involves the tRNA(Pro)-independent hydrolysis of activated Ala-AMP. The other activity is designated 'posttransfer' editing and involves deacylation of mischarged Ala-tRNA(Pro). The misacylated Cys-tRNA(Pro) is not edited by ProRS. This chain is Proline--tRNA ligase, found in Helicobacter pylori (strain Shi470).